We begin with the raw amino-acid sequence, 104 residues long: Large ribosomal subunit protein uL24 (104 aa).

The protein belongs to the universal ribosomal protein uL24 family. In terms of assembly, part of the 50S ribosomal subunit.

Its function is as follows. One of two assembly initiator proteins, it binds directly to the 5'-end of the 23S rRNA, where it nucleates assembly of the 50S subunit. Functionally, one of the proteins that surrounds the polypeptide exit tunnel on the outside of the subunit. The polypeptide is Large ribosomal subunit protein uL24 (Methylobacterium radiotolerans (strain ATCC 27329 / DSM 1819 / JCM 2831 / NBRC 15690 / NCIMB 10815 / 0-1)).